Here is a 310-residue protein sequence, read N- to C-terminus: Protein DOS2 (310 aa).

Composition is skewed to basic and acidic residues over residues D15 to G26 and S135 to E146. 2 disordered regions span residues D15–E45 and A131–G151. Residues Q176–L228 enclose the BSD domain. The tract at residues K240–E310 is disordered. The segment covering E247–K263 has biased composition (acidic residues). Composition is skewed to basic and acidic residues over residues V264–T276 and G284–S300. Positions K301–E310 are enriched in acidic residues.

Acts in ubiquitin metabolism and is necessary for the control of single-copy DNA replication. The chain is Protein DOS2 (DOS2) from Saccharomyces cerevisiae (strain ATCC 204508 / S288c) (Baker's yeast).